A 157-amino-acid chain; its full sequence is UPF0225 protein PSPPH_1399 (157 aa).

The protein belongs to the UPF0225 family.

This is UPF0225 protein PSPPH_1399 from Pseudomonas savastanoi pv. phaseolicola (strain 1448A / Race 6) (Pseudomonas syringae pv. phaseolicola (strain 1448A / Race 6)).